A 324-amino-acid polypeptide reads, in one-letter code: Putative glycosyltransferase R655 (324 aa).

The protein belongs to the glycosyltransferase 25 family.

The sequence is that of Putative glycosyltransferase R655 from Acanthamoeba polyphaga (Amoeba).